Reading from the N-terminus, the 283-residue chain is Pyridoxine/pyridoxal/pyridoxamine kinase (283 aa).

Residues S23 and H59 each coordinate substrate. D125 contributes to the ATP binding site. Y136 is a Mg(2+) binding site. ATP-binding positions include T157, E162, T195, 222–225, and T232; that span reads HAHV. E162 serves as a coordination point for Mg(2+). Position 234 (D234) interacts with substrate.

The protein belongs to the pyridoxine kinase family. PdxK subfamily. In terms of assembly, homodimer. Mg(2+) is required as a cofactor.

It carries out the reaction pyridoxal + ATP = pyridoxal 5'-phosphate + ADP + H(+). The catalysed reaction is pyridoxine + ATP = pyridoxine 5'-phosphate + ADP + H(+). The enzyme catalyses pyridoxamine + ATP = pyridoxamine 5'-phosphate + ADP + H(+). Its pathway is cofactor metabolism; pyridoxal 5'-phosphate salvage; pyridoxal 5'-phosphate from pyridoxal: step 1/1. The protein operates within cofactor metabolism; pyridoxal 5'-phosphate salvage; pyridoxine 5'-phosphate from pyridoxine: step 1/1. It participates in cofactor metabolism; pyridoxal 5'-phosphate salvage; pyridoxamine 5'-phosphate from pyridoxamine: step 1/1. B6-vitamer kinase involved in the salvage pathway of pyridoxal 5'-phosphate (PLP). Catalyzes the phosphorylation of pyridoxine (PN), pyridoxal (PL), and pyridoxamine (PM), forming their respective 5'-phosphorylated esters, i.e. PNP, PLP and PMP. This Bordetella pertussis (strain Tohama I / ATCC BAA-589 / NCTC 13251) protein is Pyridoxine/pyridoxal/pyridoxamine kinase.